We begin with the raw amino-acid sequence, 221 residues long: Probable septum site-determining protein MinC (221 aa).

Belongs to the MinC family. In terms of assembly, interacts with MinD and FtsZ.

Functionally, cell division inhibitor that blocks the formation of polar Z ring septums. Rapidly oscillates between the poles of the cell to destabilize FtsZ filaments that have formed before they mature into polar Z rings. Prevents FtsZ polymerization. The protein is Probable septum site-determining protein MinC of Aliivibrio salmonicida (strain LFI1238) (Vibrio salmonicida (strain LFI1238)).